Reading from the N-terminus, the 456-residue chain is MIWTRLPLYGHSKPSTGGWQPLRFDGGAFHLKRTAELARALLVLRLCAWPPLVTHGLAFQAWSQRLLGSRLSGALLRASIYGQFVAGETAEEVRGCVQQLQAIGLQPLLAVPTEEEPDSAAKTSEAWYEGNLSAMLHCVDLSRAVADAHGPARNSLMQLKVTALTSPRLCKELSAWIQRPRGSSELRPERLAEAMESGRNLQLSCLSTEQNQHLQASLSRLHRVAQHARAQDVRLLVDAEYTFINPALSLLVAALAMRLDSSEEEGPWVWNTYQAYLKDTHERLERDAKAAHEAGLAFGVKLVRGAYLDKERSVTQLHGKEDCTQPDYEATSRSYSRCLELMLRRVSNHGPRCHLMVASHNEESIRQATRRMWELGIPLDGPVCFGQLLGMCDHVSLALGQAGYMVYKSIPYGCLEEVIPYLIRRAQENRSVLQGARREQALLSQELWRRLLGRTA.

N6-acetyllysine is present on residues K310 and K320.

Belongs to the proline oxidase family. It depends on FAD as a cofactor.

It carries out the reaction trans-4-hydroxy-L-proline + a quinone = (3R,5S)-1-pyrroline-3-hydroxy-5-carboxylate + a quinol + H(+). The catalysed reaction is L-proline + a quinone = (S)-1-pyrroline-5-carboxylate + a quinol + H(+). Functionally, dehydrogenase that converts trans-4-L-hydroxyproline to delta-1-pyrroline-3-hydroxy-5-carboxylate (Hyp) using ubiquinone-10 as the terminal electron acceptor. Can also use proline as a substrate but with a very much lower efficiency. Does not react with other diastereomers of Hyp: trans-4-D-hydroxyproline and cis-4-L-hydroxyproline. Ubiquininone analogs such as menadione, duroquinone and ubiquinone-1 react more efficiently than oxygen as the terminal electron acceptor during catalysis. The protein is Hydroxyproline dehydrogenase of Rattus norvegicus (Rat).